The primary structure comprises 355 residues: Protein-tyrosine sulfotransferase 1 (355 aa).

Over 1–8 the chain is Cytoplasmic; the sequence is MIGKLKQN. A helical; Signal-anchor for type II membrane protein transmembrane segment spans residues 9 to 25; the sequence is LLVACLVISSVTVFYLC. Over 26-355 the chain is Lumenal; sequence RHAMDCHHRI…QKSPEKPNPS (330 aa). N-linked (GlcNAc...) asparagine glycosylation is present at Asn-55. 76–80 contacts 3'-phosphoadenylyl sulfate; it reads RSGTT. Residues Cys-94 and Cys-154 are joined by a disulfide bond. The active-site Proton donor/acceptor is the Glu-97. Positions 99 to 103 are interaction with peptide substrate; the sequence is RVIPR. The 3'-phosphoadenylyl sulfate site is built by Arg-181, Ser-189, and Arg-193. An intrachain disulfide couples Cys-223 to Cys-230. Residues Tyr-235, 282–291, and Lys-297 each bind 3'-phosphoadenylyl sulfate; that span reads STDQVIKPVN. Residues 325–355 are disordered; the sequence is HANPPNYGRPDPLVLDNTRRLQKSPEKPNPS. Residues 341–355 show a composition bias toward basic and acidic residues; it reads NTRRLQKSPEKPNPS.

This sequence belongs to the protein sulfotransferase family.

It localises to the golgi apparatus membrane. The catalysed reaction is L-tyrosyl-[protein] + 3'-phosphoadenylyl sulfate = O-sulfo-L-tyrosine-[protein] + adenosine 3',5'-bisphosphate + H(+). Catalyzes the O-sulfation of tyrosine residues within acidic motifs of polypeptides, using 3'-phosphoadenylyl sulfate (PAPS) as cosubstrate. The protein is Protein-tyrosine sulfotransferase 1 (tpst1) of Danio rerio (Zebrafish).